We begin with the raw amino-acid sequence, 1168 residues long: DNA-directed RNA polymerase subunit beta (1168 aa).

The protein belongs to the RNA polymerase beta chain family. As to quaternary structure, the RNAP catalytic core consists of 2 alpha, 1 beta, 1 beta' and 1 omega subunit. When a sigma factor is associated with the core the holoenzyme is formed, which can initiate transcription.

The enzyme catalyses RNA(n) + a ribonucleoside 5'-triphosphate = RNA(n+1) + diphosphate. Functionally, DNA-dependent RNA polymerase catalyzes the transcription of DNA into RNA using the four ribonucleoside triphosphates as substrates. This is DNA-directed RNA polymerase subunit beta from Rhodococcus jostii (strain RHA1).